Here is a 176-residue protein sequence, read N- to C-terminus: Transcription factor E (176 aa).

An HTH TFE/IIEalpha-type domain is found at 8-90; sequence NDPVIQKYLH…LWTFHYENIP (83 aa).

This sequence belongs to the TFE family. In terms of assembly, monomer. Interaction with RNA polymerase subunits RpoF and RpoE is necessary for Tfe stimulatory transcription activity. Able to interact with Tbp and RNA polymerase in the absence of DNA promoter. Interacts both with the preinitiation and elongation complexes.

Transcription factor that plays a role in the activation of archaeal genes transcribed by RNA polymerase. Facilitates transcription initiation by enhancing TATA-box recognition by TATA-box-binding protein (Tbp), and transcription factor B (Tfb) and RNA polymerase recruitment. Not absolutely required for transcription in vitro, but particularly important in cases where Tbp or Tfb function is not optimal. It dynamically alters the nucleic acid-binding properties of RNA polymerases by stabilizing the initiation complex and destabilizing elongation complexes. Seems to translocate with the RNA polymerase following initiation and acts by binding to the non template strand of the transcription bubble in elongation complexes. This chain is Transcription factor E, found in Haloquadratum walsbyi (strain DSM 16790 / HBSQ001).